The sequence spans 875 residues: Phosphoenolpyruvate carboxylase (875 aa).

Catalysis depends on residues H137 and K542.

The protein belongs to the PEPCase type 1 family. Mg(2+) serves as cofactor.

The catalysed reaction is oxaloacetate + phosphate = phosphoenolpyruvate + hydrogencarbonate. Forms oxaloacetate, a four-carbon dicarboxylic acid source for the tricarboxylic acid cycle. This is Phosphoenolpyruvate carboxylase from Pseudomonas entomophila (strain L48).